Consider the following 256-residue polypeptide: Hemin import ATP-binding protein HmuV (256 aa).

Residues 2 to 238 (ISAQNLVYSL…QELTMLYGAD (237 aa)) enclose the ABC transporter domain. Residue 34–41 (GPNGAGKS) coordinates ATP.

The protein belongs to the ABC transporter superfamily. Heme (hemin) importer (TC 3.A.1.14.5) family. In terms of assembly, the complex is composed of two ATP-binding proteins (HmuV), two transmembrane proteins (HmuU) and a solute-binding protein (HmuT).

The protein resides in the cell inner membrane. Part of the ABC transporter complex HmuTUV involved in hemin import. Responsible for energy coupling to the transport system. In Shigella dysenteriae, this protein is Hemin import ATP-binding protein HmuV.